Reading from the N-terminus, the 291-residue chain is 33 kDa chaperonin (291 aa).

Cystine bridges form between Cys236/Cys238 and Cys269/Cys272.

The protein belongs to the HSP33 family. Under oxidizing conditions two disulfide bonds are formed involving the reactive cysteines. Under reducing conditions zinc is bound to the reactive cysteines and the protein is inactive.

Its subcellular location is the cytoplasm. Redox regulated molecular chaperone. Protects both thermally unfolding and oxidatively damaged proteins from irreversible aggregation. Plays an important role in the bacterial defense system toward oxidative stress. In Lactobacillus johnsonii (strain CNCM I-12250 / La1 / NCC 533), this protein is 33 kDa chaperonin.